We begin with the raw amino-acid sequence, 498 residues long: Polygalacturonan/rhamnogalacturonan-binding protein YtcQ (498 aa).

An N-terminal signal peptide occupies residues 1–22; the sequence is MGNKWRVLLIVLVLALGGVLAG. The N-palmitoyl cysteine moiety is linked to residue Cys-23. Cys-23 is lipidated: S-diacylglycerol cysteine.

Belongs to the bacterial solute-binding protein 1 family. As to quaternary structure, the complex is probably composed of two ATP-binding proteins (MsmX), two transmembrane proteins (YtcP and YteP) and a solute-binding protein (YtcQ).

The protein localises to the cell membrane. Its function is as follows. Involved in pectin degradation. Part of the ABC transporter complex YtcQP-YteP involved in the uptake of polygalacturonan and rhamnogalacturonan type I. The polypeptide is Polygalacturonan/rhamnogalacturonan-binding protein YtcQ (ytcQ) (Bacillus subtilis (strain 168)).